A 69-amino-acid chain; its full sequence is Conotoxin reg3.6 (69 aa).

Residues 1–20 form the signal peptide; it reads MMSKLGVLLTICLLLFPLSA. A propeptide spanning residues 21 to 52 is cleaved from the precursor; the sequence is LPLDGDQPADQPAERVQDISPDQNPLFHLVKR. 3 disulfides stabilise this stretch: cysteine 54–cysteine 68, cysteine 55–cysteine 66, and cysteine 60–cysteine 69.

It belongs to the conotoxin M superfamily. Expressed by the venom duct.

It is found in the secreted. In Conus regius (Crown cone), this protein is Conotoxin reg3.6.